The sequence spans 750 residues: E3 ubiquitin-protein ligase rfwd3.S (750 aa).

The interval 92 to 206 is disordered; the sequence is RQAAEQRSSV…GAAPPAEPAP (115 aa). The span at 105–116 shows a compositional bias: basic residues; the sequence is RVQRRSTRRHQR. Positions 122-144 are enriched in polar residues; it reads TAGTSSRAALSNFFQINRTQGVA. The segment covering 168–181 has biased composition (acidic residues); the sequence is SSDETVELSEEEEG. The RING-type; degenerate zinc-finger motif lies at 263-307; sequence CAICFEPWTNAGQHRLSALRCGHLFGFTCIERWLKGGAAKCPQCN. The segment covering 387 to 405 has biased composition (low complexity); that stretch reads TSMQASSSRSTISGSLSSS. Positions 387 to 406 are disordered; sequence TSMQASSSRSTISGSLSSSQ. WD repeat units follow at residues 470-510, 512-552, and 558-603; these read IHSK…VVQT, NTGR…NCVQ, and GSRC…YRPH.

The cofactor is [4Fe-4S] cluster.

The protein resides in the nucleus. It is found in the PML body. It localises to the cytoplasm. The catalysed reaction is S-ubiquitinyl-[E2 ubiquitin-conjugating enzyme]-L-cysteine + [acceptor protein]-L-lysine = [E2 ubiquitin-conjugating enzyme]-L-cysteine + N(6)-ubiquitinyl-[acceptor protein]-L-lysine.. It participates in protein modification; protein ubiquitination. In terms of biological role, E3 ubiquitin-protein ligase required for the repair of DNA interstrand cross-links (ICL) in response to DNA damage. Plays a key role in RPA-mediated DNA damage signaling and repair. Required to translesion DNA synthesis across DNA-protein cross-link adducts by catalyzing ubiquitination of proteins on single-stranded DNA (ssDNA). Mediates ubiquitination of the hmces DNA-protein cross-link, possibly promoting its degradation. The polypeptide is E3 ubiquitin-protein ligase rfwd3.S (rfwd3.S) (Xenopus laevis (African clawed frog)).